A 201-amino-acid polypeptide reads, in one-letter code: Prostamide/prostaglandin F synthase (201 aa).

Position 108 is a phosphotyrosine (Y108).

This sequence belongs to the peroxiredoxin-like PRXL2 family. Prostamide/prostaglandin F synthase subfamily.

Its subcellular location is the cytoplasm. It localises to the cytosol. It carries out the reaction prostaglandin H2 + [thioredoxin]-dithiol = prostaglandin F2alpha + [thioredoxin]-disulfide. It catalyses the reaction prostamide F2alpha + [thioredoxin]-disulfide = prostamide H2 + [thioredoxin]-dithiol. Catalyzes the reduction of prostaglandin-ethanolamide H(2) (prostamide H(2)) to prostamide F(2alpha) with NADPH as proton donor. Also able to reduce prostaglandin H(2) to prostaglandin F(2alpha). In Bos taurus (Bovine), this protein is Prostamide/prostaglandin F synthase (PRXL2B).